The chain runs to 189 residues: MSLRLITWDIKDTLLRVRVPVGQQYFAEAKRQGLCMDPGSLETSFRNAYRTHSRLFPNYGLAQGMDSRQWWLDVVLQTFRLSGAEDDETVRSVAQQLYQDFSTARNWAVVPGAREALDSCKGLGLKMAVISNFDRRLEEQPMKDEPAADHMGYKRYPAASPGAGGAAVFCRSQEARSLYGPRFLGDIVP.

Belongs to the HAD-like hydrolase superfamily.

The chain is Haloacid dehalogenase-like hydrolase domain-containing protein 3 (hdhd3) from Xenopus tropicalis (Western clawed frog).